A 267-amino-acid polypeptide reads, in one-letter code: Cell cycle checkpoint protein RAD1 homolog mrt-2 (267 aa).

It belongs to the Rad1 family. Probable component of the toroidal 9-1-1 (RAD9-RAD1-HUS1) complex, composed of hpr-9, mrt-2 and hus-1. Interacts with hus-1. Might associate with hpr-9.

It localises to the nucleus. It carries out the reaction Exonucleolytic cleavage in the 3'- to 5'-direction to yield nucleoside 5'-phosphates.. Functionally, may be a component of the 9-1-1 cell-cycle checkpoint response complex that plays a major role in DNA repair. Promotes DNA double strand break-induced cell cycle arrest and apoptosis, thereby playing a role in genome stability. Also required for telomere length maintenance and germline immortality. May possess 3'-&gt;5' double stranded DNA exonuclease activity. The sequence is that of Cell cycle checkpoint protein RAD1 homolog mrt-2 from Caenorhabditis elegans.